The sequence spans 295 residues: Homeobox protein XHOX-7.1 (295 aa).

Disordered stretches follow at residues 75–115 (RKPG…PISL) and 134–175 (KPES…KPRT). The span at 84 to 97 (SSPTGSPLAGTSHS) shows a compositional bias: polar residues. Residues 141 to 153 (SSWIQSPSFSPSP) show a composition bias toward low complexity. Over residues 164 to 174 (LRKHKTNRKPR) the composition is skewed to basic residues. A DNA-binding region (homeobox) is located at residues 170-229 (NRKPRTPFTTSQLLALERKFRQKQYLSIAERAEFSSSLNLTETQVKIWFQNRRAKAKRLQ).

Belongs to the Msh homeobox family.

It is found in the nucleus. The protein is Homeobox protein XHOX-7.1 of Xenopus laevis (African clawed frog).